A 95-amino-acid chain; its full sequence is Cobalt transport protein CbiN (95 aa).

2 helical membrane-spanning segments follow: residues 7 to 27 (IMLI…SGLG) and 67 to 87 (LLFA…FGYY).

Belongs to the CbiN family. As to quaternary structure, forms an energy-coupling factor (ECF) transporter complex composed of an ATP-binding protein (A component, CbiO), a transmembrane protein (T component, CbiQ) and 2 possible substrate-capture proteins (S components, CbiM and CbiN) of unknown stoichimetry.

It is found in the cell membrane. The protein operates within cofactor biosynthesis; adenosylcobalamin biosynthesis. Its function is as follows. Part of the energy-coupling factor (ECF) transporter complex CbiMNOQ involved in cobalt import. The sequence is that of Cobalt transport protein CbiN from Methanothermobacter marburgensis (strain ATCC BAA-927 / DSM 2133 / JCM 14651 / NBRC 100331 / OCM 82 / Marburg) (Methanobacterium thermoautotrophicum).